Here is a 199-residue protein sequence, read N- to C-terminus: MNSVGRRNNRRRNGPRRARRVSAVRRMVVVQPNRAGPKRRARRRTRGGGANLISGPAGRTEVFVFSVNDLKANSSGTIKFGPDLSQCPALSGGILKSYHRYKITNVKVEFKSHASASTVGAMFIELDTSCSQSALGSYINSFTISKSATKTFTAQQIDGKEFRESTVNQFYMLYKANGSTSDTAGQFIITIRVANMTPK.

Disordered stretches follow at residues 1–21 and 33–52; these read MNSV…ARRV and NRAG…GANL. 2 stretches are compositionally biased toward basic residues: residues 7–21 and 36–46; these read RNNR…ARRV and GPKRRARRRTR.

It belongs to the luteoviruses capsid protein family.

It is found in the virion. In terms of biological role, major capsid protein. The protein is Major capsid protein of Avena byzantina (Oat).